We begin with the raw amino-acid sequence, 65 residues long: Large ribosomal subunit protein uL30 (65 aa).

Belongs to the universal ribosomal protein uL30 family. In terms of assembly, part of the 50S ribosomal subunit.

This Chloroflexus aurantiacus (strain ATCC 29366 / DSM 635 / J-10-fl) protein is Large ribosomal subunit protein uL30.